Consider the following 362-residue polypeptide: UDP-N-acetylglucosamine--N-acetylmuramyl-(pentapeptide) pyrophosphoryl-undecaprenol N-acetylglucosamine transferase (362 aa).

UDP-N-acetyl-alpha-D-glucosamine contacts are provided by residues 15-17 (TGG), asparagine 127, arginine 165, serine 191, isoleucine 247, 266-271 (ALTVSE), and glutamine 292.

This sequence belongs to the glycosyltransferase 28 family. MurG subfamily.

It localises to the cell inner membrane. The enzyme catalyses di-trans,octa-cis-undecaprenyl diphospho-N-acetyl-alpha-D-muramoyl-L-alanyl-D-glutamyl-meso-2,6-diaminopimeloyl-D-alanyl-D-alanine + UDP-N-acetyl-alpha-D-glucosamine = di-trans,octa-cis-undecaprenyl diphospho-[N-acetyl-alpha-D-glucosaminyl-(1-&gt;4)]-N-acetyl-alpha-D-muramoyl-L-alanyl-D-glutamyl-meso-2,6-diaminopimeloyl-D-alanyl-D-alanine + UDP + H(+). The protein operates within cell wall biogenesis; peptidoglycan biosynthesis. In terms of biological role, cell wall formation. Catalyzes the transfer of a GlcNAc subunit on undecaprenyl-pyrophosphoryl-MurNAc-pentapeptide (lipid intermediate I) to form undecaprenyl-pyrophosphoryl-MurNAc-(pentapeptide)GlcNAc (lipid intermediate II). This chain is UDP-N-acetylglucosamine--N-acetylmuramyl-(pentapeptide) pyrophosphoryl-undecaprenol N-acetylglucosamine transferase, found in Shewanella putrefaciens (strain CN-32 / ATCC BAA-453).